Reading from the N-terminus, the 295-residue chain is MSDISPQDQARILSEALPHMQQYDEETIVIKYGGHAMGEEHLAREFARDIVLLEQTAINPVVVHGGGPQIATMLGRLGIKSEFAAGLRITDASAIEIVEMVLAGSINKQIVSHINAAGGKAVGLSGKDGNMVTAVKATRTMIDPDSNIEKVIDLGFVGEPDKVDLALLNQLIGHELIPVLAPLAVSTDGQTYNVNADTFAGAVAGALRAKRLLLLTDVAGVLDKSKKLIPELSIKDARRLIADGTISGGMIPKVETCIYALEAGVEGVVILDGKTPHAVLLELFTNQGTGTLIYK.

Residues 66–67 (GG), R88, and N193 contribute to the substrate site.

The protein belongs to the acetylglutamate kinase family. ArgB subfamily.

It is found in the cytoplasm. It catalyses the reaction N-acetyl-L-glutamate + ATP = N-acetyl-L-glutamyl 5-phosphate + ADP. It participates in amino-acid biosynthesis; L-arginine biosynthesis; N(2)-acetyl-L-ornithine from L-glutamate: step 2/4. In terms of biological role, catalyzes the ATP-dependent phosphorylation of N-acetyl-L-glutamate. This chain is Acetylglutamate kinase, found in Afipia carboxidovorans (strain ATCC 49405 / DSM 1227 / KCTC 32145 / OM5) (Oligotropha carboxidovorans).